The following is a 272-amino-acid chain: Ethanolamine ammonia-lyase small subunit (272 aa).

Val161, Glu182, and Cys211 together coordinate adenosylcob(III)alamin.

The protein belongs to the EutC family. As to quaternary structure, the basic unit is a heterodimer which dimerizes to form tetramers. The heterotetramers trimerize; 6 large subunits form a core ring with 6 small subunits projecting outwards. Requires adenosylcob(III)alamin as cofactor.

It localises to the bacterial microcompartment. The catalysed reaction is ethanolamine = acetaldehyde + NH4(+). The protein operates within amine and polyamine degradation; ethanolamine degradation. Catalyzes the deamination of various vicinal amino-alcohols to oxo compounds. Allows this organism to utilize ethanolamine as the sole source of nitrogen and carbon in the presence of external vitamin B12. The protein is Ethanolamine ammonia-lyase small subunit of Xanthomonas campestris pv. campestris (strain ATCC 33913 / DSM 3586 / NCPPB 528 / LMG 568 / P 25).